Here is a 101-residue protein sequence, read N- to C-terminus: NAD(P)H-quinone oxidoreductase subunit 4L, chloroplastic (101 aa).

Transmembrane regions (helical) follow at residues 2-22 (MLEH…YGLI), 32-52 (MCLE…SDFF), and 61-81 (IFSI…PAIV).

The protein belongs to the complex I subunit 4L family. NDH is composed of at least 16 different subunits, 5 of which are encoded in the nucleus.

The protein resides in the plastid. Its subcellular location is the chloroplast thylakoid membrane. It catalyses the reaction a plastoquinone + NADH + (n+1) H(+)(in) = a plastoquinol + NAD(+) + n H(+)(out). It carries out the reaction a plastoquinone + NADPH + (n+1) H(+)(in) = a plastoquinol + NADP(+) + n H(+)(out). In terms of biological role, NDH shuttles electrons from NAD(P)H:plastoquinone, via FMN and iron-sulfur (Fe-S) centers, to quinones in the photosynthetic chain and possibly in a chloroplast respiratory chain. The immediate electron acceptor for the enzyme in this species is believed to be plastoquinone. Couples the redox reaction to proton translocation, and thus conserves the redox energy in a proton gradient. The protein is NAD(P)H-quinone oxidoreductase subunit 4L, chloroplastic of Morus indica (Mulberry).